A 1029-amino-acid polypeptide reads, in one-letter code: Myosin phosphatase Rho-interacting protein (1029 aa).

Residues 1–387 (MSAAKENPCR…DRRSTESSMT (387 aa)) form an interaction with F-actin region. Residues 43 to 150 (KPIYGGWLLL…WLEMLMVYPR (108 aa)) form the PH 1 domain. The segment at 152-267 (NKQNQKKKRK…GDRVDGGRKV (116 aa)) is disordered. The segment covering 179–195 (SSSGGSSGSSSSSSSSS) has biased composition (low complexity). Residues serine 198, serine 224, serine 226, serine 230, and serine 232 each carry the phosphoserine modification. Residues 226–237 (SPVQSPSQSQPP) show a composition bias toward low complexity. A compositionally biased stretch (basic and acidic residues) spans 245-267 (TGLDSKEDENILSGDRVDGGRKV). A phosphoserine mark is found at serine 271, serine 275, serine 294, and serine 297. Disordered regions lie at residues 279-306 (AKQD…SRRS) and 333-383 (PSSD…RSTE). Threonine 300 carries the post-translational modification Phosphothreonine. The segment covering 338-354 (RQGRSERRAIPRKRDFA) has biased composition (basic and acidic residues). Serine 369 carries the phosphoserine modification. The region spanning 391 to 487 (LNFKKGWLTK…WIQTIMKHVL (97 aa)) is the PH 2 domain. The segment at 490–614 (SAPDVTSSLP…NDGPGMEDTA (125 aa)) is disordered. The span at 492–509 (PDVTSSLPEGKNKSTSFD) shows a compositional bias: polar residues. Phosphoserine is present on serine 497. Over residues 527–550 (PEQKKSRARERRREGRSKTFDWAE) the composition is skewed to basic and acidic residues. The interval 550–828 (EFRPIQQALA…SVQRELEVLS (279 aa)) is interaction with RHOA. Polar residues predominate over residues 562–571 (RASTVGSSDS). Residues 583–592 (ELERERARRR) are compositionally biased toward basic and acidic residues. Serine 622 is subject to Phosphoserine. Threonine 650 is modified (phosphothreonine). Residues 675 to 979 (STHELTSLLE…LKAATEALGE (305 aa)) adopt a coiled-coil conformation. The residue at position 804 (serine 804) is a Phosphoserine. Positions 828–883 (SEQYSQKCLENAHLAQALEAERQALRQCQRENQELNAHNQELNNRLAAEITRLRTL) are interaction with PPP1R12A. A phosphoserine mark is found at serine 981, serine 997, serine 1018, and serine 1020.

As to quaternary structure, binds RHOA, PPP1R12A/MBS and PPP1R12C/MBS85 through adjacent coiled coil domains. Interacts with MYZAP. Binds F-actin through its N-terminus.

Its subcellular location is the cytoplasm. The protein resides in the cytoskeleton. Targets myosin phosphatase to the actin cytoskeleton. Required for the regulation of the actin cytoskeleton by RhoA and ROCK1. Depletion leads to an increased number of stress fibers in smooth muscle cells through stabilization of actin fibers by phosphorylated myosin. Overexpression of MRIP as well as its F-actin-binding region leads to disassembly of stress fibers in neuronal cells. In Rattus norvegicus (Rat), this protein is Myosin phosphatase Rho-interacting protein (Mprip).